The chain runs to 423 residues: RNA polymerase sigma factor SigA (423 aa).

The disordered stretch occupies residues 1-76 (MKKSKRKNAQ…EEDLPIPKIS (76 aa)). The segment covering 21 to 70 (VQEEAEELPEFPEGEPDPDLEDPDLALEDDLLDLPEEGEGLDLEEEEEDL) has biased composition (acidic residues). Residues 78 to 113 (SDPVRQYLHEIGQVPLLTLEEEVELARKVEEGMEAI) form a sigma-70 factor domain-1 region. The segment at 187–257 (LIEANLRLVV…NRAIADQART (71 aa)) is sigma-70 factor domain-2. The Interaction with polymerase core subunit RpoC motif lies at 211-214 (DLIQ). The segment at 266 to 344 (ETINKLSRTA…DEHLPSPVDA (79 aa)) is sigma-70 factor domain-3. The segment at 357–409 (ALSKLSEREAMVLKLRKGLIDGREHTLEEVGAFFGVTRERIRQIENKALRKLK) is sigma-70 factor domain-4. A DNA-binding region (H-T-H motif) is located at residues 383–402 (LEEVGAFFGVTRERIRQIEN).

It belongs to the sigma-70 factor family. RpoD/SigA subfamily. As to quaternary structure, interacts transiently with the RNA polymerase catalytic core formed by RpoA, RpoB, RpoC and RpoZ (2 alpha, 1 beta, 1 beta' and 1 omega subunit) to form the RNA polymerase holoenzyme that can initiate transcription.

Its subcellular location is the cytoplasm. Its function is as follows. Sigma factors are initiation factors that promote the attachment of RNA polymerase to specific initiation sites and are then released. This sigma factor is the primary sigma factor during exponential growth. The polypeptide is RNA polymerase sigma factor SigA (Thermus thermophilus (strain ATCC BAA-163 / DSM 7039 / HB27)).